The chain runs to 1110 residues: Retinal guanylyl cyclase 1 (1110 aa).

Residues 1-56 (MTACTFLAGGLRDPGLCGPTRWAPSPPGLPPIPPRPRLRLRPPLLLLLLLPRSVLS) form the signal peptide. Residues 57-467 (AVFTVGVLGP…PDTICNGGVE (411 aa)) are Extracellular-facing. N-linked (GlcNAc...) asparagine glycosylation occurs at Asn302. Residues 468–492 (PSVVFIGFLLVVGMGLAGAFLAHYC) traverse the membrane as a helical segment. The Protein kinase domain maps to 493-813 (RHRLLHIQMV…DRTFELFKSI (321 aa)). Residues 493-1110 (RHRLLHIQMV…KARPGQFSGK (618 aa)) are Cytoplasmic-facing. A Guanylate cyclase domain is found at 885–1015 (TLYFSDIVGF…DTVNTASAME (131 aa)). Residues 1070–1110 (PIPKPPDLQPGASNHGISLHEIPPDRRQKLEKARPGQFSGK) are disordered. A compositionally biased stretch (basic and acidic residues) spans 1091–1103 (IPPDRRQKLEKAR).

This sequence belongs to the adenylyl cyclase class-4/guanylyl cyclase family. As to quaternary structure, homodimer; requires homodimerization for guanylyl cyclase activity. Interacts (via C-terminus) with RD3 (via C-terminus); promotes the exit of GUCY2D from the endoplasmic reticulum and its trafficking to the photoreceptor outer segments. Interaction with RD3 negatively regulates GUCY2D guanylate cyclase activity. In terms of tissue distribution, expressed in the retina in rod outer segment.

The protein localises to the photoreceptor outer segment membrane. It localises to the endoplasmic reticulum membrane. It catalyses the reaction GTP = 3',5'-cyclic GMP + diphosphate. Its activity is regulated as follows. Activated by GUCA1A when free calcium ions concentration is low, and inhibited by GUCA1A when free calcium ions concentration is high. Negatively regulated by RD3; inhibits the basal and GUCA1A-stimulated guanylate cyclase activity. Its function is as follows. Catalyzes the synthesis of cyclic GMP (cGMP) in rods and cones of photoreceptors. Plays an essential role in phototransduction, by mediating cGMP replenishment. May also participate in the trafficking of membrane-asociated proteins to the photoreceptor outer segment membrane. The chain is Retinal guanylyl cyclase 1 (GUCY2D) from Bos taurus (Bovine).